The primary structure comprises 161 residues: MTLYDTVKELQEKLRNGEIEINTFLERLGLTLDSIWSQKLRVTGLFKYNVIKATLLSIAKTTCMYYFNKIPDVEAEDSIITTLTKIYSFISQNVKENRDKFETELVAFGKQNEIKSVADSIMIMIVENLMASLGYTETEKKYIPISDFMIRLQNIQNTTGS.

The stretch at 1 to 29 forms a coiled coil; that stretch reads MTLYDTVKELQEKLRNGEIEINTFLERLG.

This is an uncharacterized protein from Acidianus convivator (ATV).